The chain runs to 277 residues: Carbonyl reductase [NADPH] 1 (277 aa).

NADP(+)-binding positions include 10 to 34, 63 to 64, and Asn-90; these read VTGANKGVGFAITRALCRLFSGDVL and DI. The residue at position 30 (Ser-30) is a Phosphoserine. Glutathione contacts are provided by residues 95 to 97 and Gln-106; that span reads FKM. Ser-140 provides a ligand contact to substrate. 193-194 contacts glutathione; it reads AY. Catalysis depends on Tyr-194, which acts as the Proton acceptor. Residues 194–198 and 231–233 each bind NADP(+); these read YGVTK and VRT.

The protein belongs to the short-chain dehydrogenases/reductases (SDR) family. In terms of assembly, monomer. As to expression, present in liver and kidney.

The protein localises to the cytoplasm. It carries out the reaction a secondary alcohol + NADP(+) = a ketone + NADPH + H(+). The catalysed reaction is prostaglandin F2alpha + NADP(+) = prostaglandin E2 + NADPH + H(+). The enzyme catalyses prostaglandin E1 + NADP(+) = 15-oxoprostaglandin E1 + NADPH + H(+). It catalyses the reaction menadione + NADPH + H(+) = menadiol + NADP(+). It carries out the reaction prostaglandin D2 + NADP(+) = 15-oxoprostaglandin D2 + NADPH + H(+). The catalysed reaction is prostaglandin E2 + NADP(+) = 15-oxoprostaglandin E2 + NADPH + H(+). The enzyme catalyses prostaglandin F2alpha + NADP(+) = 15-oxoprostaglandin F2alpha + NADPH + H(+). It catalyses the reaction daunorubicin + NADPH + H(+) = 13-dihydrodaunorubicin + NADP(+). It carries out the reaction S-nitrosoglutathione + NADPH + H(+) = S-(hydroxysulfenamide)glutathione + NADP(+). The catalysed reaction is a primary alcohol + NADP(+) = an aldehyde + NADPH + H(+). The enzyme catalyses cortisol + NADPH + H(+) = 20beta-dihydrocortisol + NADP(+). It catalyses the reaction corticosterone + NADPH + H(+) = 20beta-dihydrocorticosterone + NADP(+). Its function is as follows. NADPH-dependent reductase with broad substrate specificity. Catalyzes the reduction of a wide variety of carbonyl compounds including quinones, prostaglandins, menadione, plus various xenobiotics. Catalyzes the reduction of the antitumor anthracyclines doxorubicin and daunorubicin to the cardiotoxic compounds doxorubicinol and daunorubicinol. Can convert prostaglandin E to prostaglandin F2-alpha. Can bind glutathione, which explains its higher affinity for glutathione-conjugated substrates. Catalyzes the reduction of S-nitrosoglutathione. In addition, participates in the glucocorticoid metabolism by catalyzing the NADPH-dependent cortisol/corticosterone into 20beta-dihydrocortisol (20b-DHF) or 20beta-corticosterone (20b-DHB), which are weak agonists of NR3C1 and NR3C2 in adipose tissue. The polypeptide is Carbonyl reductase [NADPH] 1 (Oryctolagus cuniculus (Rabbit)).